The following is a 293-amino-acid chain: 4-hydroxy-tetrahydrodipicolinate synthase (293 aa).

Threonine 44 contacts pyruvate. The Proton donor/acceptor role is filled by tyrosine 132. Lysine 162 functions as the Schiff-base intermediate with substrate in the catalytic mechanism. Isoleucine 204 is a binding site for pyruvate.

The protein belongs to the DapA family. In terms of assembly, homotetramer; dimer of dimers.

The protein localises to the cytoplasm. It catalyses the reaction L-aspartate 4-semialdehyde + pyruvate = (2S,4S)-4-hydroxy-2,3,4,5-tetrahydrodipicolinate + H2O + H(+). It functions in the pathway amino-acid biosynthesis; L-lysine biosynthesis via DAP pathway; (S)-tetrahydrodipicolinate from L-aspartate: step 3/4. Its function is as follows. Catalyzes the condensation of (S)-aspartate-beta-semialdehyde [(S)-ASA] and pyruvate to 4-hydroxy-tetrahydrodipicolinate (HTPA). The chain is 4-hydroxy-tetrahydrodipicolinate synthase from Erythrobacter litoralis (strain HTCC2594).